A 271-amino-acid polypeptide reads, in one-letter code: MPELPEVEVTRLSFAFEIAGARVISVRIGKPLRWPLGCSPTQLAGRSVQAVRRRGKYLLIDLDQGLLLVHLGMSGSLSFARQLPPAGAHDHFEMTTTLGTLRLTDPRRFGAVVYAKGEDAPEAHKLLGKLGMEPLSDDFDVDRFHDELKRRRAAIKQVLLAGDTVVGVGNIYASEALFMAGIRPTLSAARLSRPRSARLHAAIRDVLARAVATGGSTLRDFSSAKGENGHFQLEAMVYARQGQPCRVCATPIKSLRQGQRSTFYCPHCQKA.

Catalysis depends on P2, which acts as the Schiff-base intermediate with DNA. Residue E3 is the Proton donor of the active site. The active-site Proton donor; for beta-elimination activity is the K56. DNA contacts are provided by H89, R107, and R151. Residues 236–270 form an FPG-type zinc finger; that stretch reads MVYARQGQPCRVCATPIKSLRQGQRSTFYCPHCQK. The active-site Proton donor; for delta-elimination activity is the R260.

The protein belongs to the FPG family. Monomer. The cofactor is Zn(2+).

It carries out the reaction Hydrolysis of DNA containing ring-opened 7-methylguanine residues, releasing 2,6-diamino-4-hydroxy-5-(N-methyl)formamidopyrimidine.. The enzyme catalyses 2'-deoxyribonucleotide-(2'-deoxyribose 5'-phosphate)-2'-deoxyribonucleotide-DNA = a 3'-end 2'-deoxyribonucleotide-(2,3-dehydro-2,3-deoxyribose 5'-phosphate)-DNA + a 5'-end 5'-phospho-2'-deoxyribonucleoside-DNA + H(+). In terms of biological role, involved in base excision repair of DNA damaged by oxidation or by mutagenic agents. Acts as a DNA glycosylase that recognizes and removes damaged bases. Has a preference for oxidized purines, such as 7,8-dihydro-8-oxoguanine (8-oxoG). Has AP (apurinic/apyrimidinic) lyase activity and introduces nicks in the DNA strand. Cleaves the DNA backbone by beta-delta elimination to generate a single-strand break at the site of the removed base with both 3'- and 5'-phosphates. In Albidiferax ferrireducens (strain ATCC BAA-621 / DSM 15236 / T118) (Rhodoferax ferrireducens), this protein is Formamidopyrimidine-DNA glycosylase.